The chain runs to 296 residues: GTPase Era (296 aa).

The Era-type G domain occupies 2-171 (KAGFIAVVGR…LEALDPYLED (170 aa)). The segment at 10 to 17 (GRPNVGKS) is G1. GTP is bound at residue 10-17 (GRPNVGKS). The G2 stretch occupies residues 36-40 (GTTRD). Residues 57–60 (DTPG) form a G3 region. GTP contacts are provided by residues 57–61 (DTPGI) and 120–123 (NKVD). A G4 region spans residues 120-123 (NKVD). The G5 stretch occupies residues 150–152 (ASG). A KH type-2 domain is found at 202–279 (TRDEIPHSVA…YLGLWVKVKD (78 aa)).

This sequence belongs to the TRAFAC class TrmE-Era-EngA-EngB-Septin-like GTPase superfamily. Era GTPase family. In terms of assembly, monomer.

It localises to the cytoplasm. It is found in the cell inner membrane. In terms of biological role, an essential GTPase that binds both GDP and GTP, with rapid nucleotide exchange. Plays a role in 16S rRNA processing and 30S ribosomal subunit biogenesis and possibly also in cell cycle regulation and energy metabolism. This Fusobacterium nucleatum subsp. nucleatum (strain ATCC 25586 / DSM 15643 / BCRC 10681 / CIP 101130 / JCM 8532 / KCTC 2640 / LMG 13131 / VPI 4355) protein is GTPase Era.